The following is a 313-amino-acid chain: tRNA (guanine-N(7)-)-methyltransferase (313 aa).

Residues glutamate 33, glutamate 58, and aspartate 85 each contribute to the S-adenosyl-L-methionine site. Residues lysine 112, aspartate 144, and 177-180 (TRYE) each bind substrate.

The protein belongs to the class I-like SAM-binding methyltransferase superfamily. TrmB family.

The catalysed reaction is guanosine(46) in tRNA + S-adenosyl-L-methionine = N(7)-methylguanosine(46) in tRNA + S-adenosyl-L-homocysteine. The protein operates within tRNA modification; N(7)-methylguanine-tRNA biosynthesis. In terms of biological role, catalyzes the formation of N(7)-methylguanine at position 46 (m7G46) in tRNA. The sequence is that of tRNA (guanine-N(7)-)-methyltransferase from Thermotoga maritima (strain ATCC 43589 / DSM 3109 / JCM 10099 / NBRC 100826 / MSB8).